A 437-amino-acid polypeptide reads, in one-letter code: Phosphomethylpyrimidine synthase (437 aa).

Residues asparagine 69, methionine 98, tyrosine 127, histidine 163, 185–187 (SRG), 226–229 (DACR), and glutamate 265 each bind substrate. Histidine 269 lines the Zn(2+) pocket. Tyrosine 292 lines the substrate pocket. Histidine 333 contacts Zn(2+). 3 residues coordinate [4Fe-4S] cluster: cysteine 409, cysteine 412, and cysteine 416.

The protein belongs to the ThiC family. [4Fe-4S] cluster serves as cofactor.

It catalyses the reaction 5-amino-1-(5-phospho-beta-D-ribosyl)imidazole + S-adenosyl-L-methionine = 4-amino-2-methyl-5-(phosphooxymethyl)pyrimidine + CO + 5'-deoxyadenosine + formate + L-methionine + 3 H(+). It participates in cofactor biosynthesis; thiamine diphosphate biosynthesis. Catalyzes the synthesis of the hydroxymethylpyrimidine phosphate (HMP-P) moiety of thiamine from aminoimidazole ribotide (AIR) in a radical S-adenosyl-L-methionine (SAM)-dependent reaction. This is Phosphomethylpyrimidine synthase from Clostridium novyi (strain NT).